Here is a 361-residue protein sequence, read N- to C-terminus: MHPPRPTTDLPEDFYIPMALDAPNITALSPFLVPQTHLGSPGLFRAMAAFMFLLIALGVPINTLTIFCTARFRKLRSHLNYILVNLALANLLVILVGSTTACYSFSQMYFALGPTACKIEGFAATLGGMVSLWSLAVVAFERFLVICKPLGNFTFRGSHAVLGCVATWVLGFVASAPPLFGWSRYIPEGLQCSCGPDWYTTDNKWHNESYVLFLFTFCFGVPLAIIVFSYGRLLITLRAVARQQEQSATTQKADREVTKMVVVMVLGFLVCWAPYTAFALWVVTHRGRSFEVGLASIPSVFSKSSTVYNPVIYVLMNKQFRSCMLKLLFCGRSPFGDDEDVSGSSQATQVSSVSSSHVAPA.

Over 1-43 (MHPPRPTTDLPEDFYIPMALDAPNITALSPFLVPQTHLGSPGL) the chain is Extracellular. Asn24 carries N-linked (GlcNAc...) asparagine glycosylation. A helical transmembrane segment spans residues 44–68 (FRAMAAFMFLLIALGVPINTLTIFC). Residues 69 to 80 (TARFRKLRSHLN) lie on the Cytoplasmic side of the membrane. Residues 81 to 106 (YILVNLALANLLVILVGSTTACYSFS) form a helical membrane-spanning segment. The Extracellular segment spans residues 107–120 (QMYFALGPTACKIE). Residues Cys117 and Cys194 are joined by a disulfide bond. Residues 121-140 (GFAATLGGMVSLWSLAVVAF) form a helical membrane-spanning segment. At 141-159 (ERFLVICKPLGNFTFRGSH) the chain is on the cytoplasmic side. A helical transmembrane segment spans residues 160–183 (AVLGCVATWVLGFVASAPPLFGWS). The Extracellular portion of the chain corresponds to 184-209 (RYIPEGLQCSCGPDWYTTDNKWHNES). The chain crosses the membrane as a helical span at residues 210 to 237 (YVLFLFTFCFGVPLAIIVFSYGRLLITL). Topologically, residues 238-259 (RAVARQQEQSATTQKADREVTK) are cytoplasmic. A helical membrane pass occupies residues 260–283 (MVVVMVLGFLVCWAPYTAFALWVV). Residues 284-291 (THRGRSFE) lie on the Extracellular side of the membrane. The chain crosses the membrane as a helical span at residues 292-316 (VGLASIPSVFSKSSTVYNPVIYVLM). Lys303 carries the post-translational modification N6-(retinylidene)lysine. The Cytoplasmic segment spans residues 317-361 (NKQFRSCMLKLLFCGRSPFGDDEDVSGSSQATQVSSVSSSHVAPA). Positions 338 to 361 (DEDVSGSSQATQVSSVSSSHVAPA) are disordered. The span at 342–361 (SGSSQATQVSSVSSSHVAPA) shows a compositional bias: low complexity.

Belongs to the G-protein coupled receptor 1 family. Opsin subfamily. Post-translationally, phosphorylated on some or all of the serine and threonine residues present in the C-terminal region. In terms of tissue distribution, the color pigments are found in the cone photoreceptor cells.

It is found in the membrane. Functionally, visual pigments are the light-absorbing molecules that mediate vision. They consist of an apoprotein, opsin, covalently linked to cis-retinal. The sequence is that of Blue-sensitive opsin from Gallus gallus (Chicken).